A 335-amino-acid chain; its full sequence is Fructose-1,6-bisphosphatase class 1 (335 aa).

Residues glutamate 92, aspartate 114, leucine 116, and aspartate 117 each contribute to the Mg(2+) site. Substrate-binding positions include 117-120 (DGSS), asparagine 209, and lysine 275. Glutamate 281 provides a ligand contact to Mg(2+).

The protein belongs to the FBPase class 1 family. Homotetramer. The cofactor is Mg(2+).

It localises to the cytoplasm. It catalyses the reaction beta-D-fructose 1,6-bisphosphate + H2O = beta-D-fructose 6-phosphate + phosphate. The protein operates within carbohydrate biosynthesis; gluconeogenesis. This Delftia acidovorans (strain DSM 14801 / SPH-1) protein is Fructose-1,6-bisphosphatase class 1.